A 92-amino-acid polypeptide reads, in one-letter code: Small ribosomal subunit protein uS19 (92 aa).

This sequence belongs to the universal ribosomal protein uS19 family.

Protein S19 forms a complex with S13 that binds strongly to the 16S ribosomal RNA. This Aliivibrio salmonicida (strain LFI1238) (Vibrio salmonicida (strain LFI1238)) protein is Small ribosomal subunit protein uS19.